The following is a 347-amino-acid chain: Holliday junction branch migration complex subunit RuvB (347 aa).

Positions 1–186 (MKDENSINFL…FGITARFELY (186 aa)) are large ATPase domain (RuvB-L). Residues leucine 25, arginine 26, glycine 67, lysine 70, threonine 71, threonine 72, 133-135 (EDY), arginine 176, tyrosine 186, and arginine 223 each bind ATP. A Mg(2+)-binding site is contributed by threonine 71. Residues 187–257 (SEIELVEIIK…IVSIGLEMLR (71 aa)) are small ATPAse domain (RuvB-S). Residues 260 to 347 (GEGLDEQDRN…DISENQRVSF (88 aa)) are head domain (RuvB-H). Arginine 315 and arginine 320 together coordinate DNA.

The protein belongs to the RuvB family. As to quaternary structure, homohexamer. Forms an RuvA(8)-RuvB(12)-Holliday junction (HJ) complex. HJ DNA is sandwiched between 2 RuvA tetramers; dsDNA enters through RuvA and exits via RuvB. An RuvB hexamer assembles on each DNA strand where it exits the tetramer. Each RuvB hexamer is contacted by two RuvA subunits (via domain III) on 2 adjacent RuvB subunits; this complex drives branch migration. In the full resolvosome a probable DNA-RuvA(4)-RuvB(12)-RuvC(2) complex forms which resolves the HJ.

Its subcellular location is the cytoplasm. It carries out the reaction ATP + H2O = ADP + phosphate + H(+). In terms of biological role, the RuvA-RuvB-RuvC complex processes Holliday junction (HJ) DNA during genetic recombination and DNA repair, while the RuvA-RuvB complex plays an important role in the rescue of blocked DNA replication forks via replication fork reversal (RFR). RuvA specifically binds to HJ cruciform DNA, conferring on it an open structure. The RuvB hexamer acts as an ATP-dependent pump, pulling dsDNA into and through the RuvAB complex. RuvB forms 2 homohexamers on either side of HJ DNA bound by 1 or 2 RuvA tetramers; 4 subunits per hexamer contact DNA at a time. Coordinated motions by a converter formed by DNA-disengaged RuvB subunits stimulates ATP hydrolysis and nucleotide exchange. Immobilization of the converter enables RuvB to convert the ATP-contained energy into a lever motion, pulling 2 nucleotides of DNA out of the RuvA tetramer per ATP hydrolyzed, thus driving DNA branch migration. The RuvB motors rotate together with the DNA substrate, which together with the progressing nucleotide cycle form the mechanistic basis for DNA recombination by continuous HJ branch migration. Branch migration allows RuvC to scan DNA until it finds its consensus sequence, where it cleaves and resolves cruciform DNA. This is Holliday junction branch migration complex subunit RuvB from Borrelia garinii subsp. bavariensis (strain ATCC BAA-2496 / DSM 23469 / PBi) (Borreliella bavariensis).